A 424-amino-acid polypeptide reads, in one-letter code: Serine--tRNA ligase (424 aa).

231–233 (TAE) serves as a coordination point for L-serine. An ATP-binding site is contributed by 262–264 (RSE). Glu285 is a binding site for L-serine. 349–352 (EISS) provides a ligand contact to ATP. Ser385 serves as a coordination point for L-serine.

It belongs to the class-II aminoacyl-tRNA synthetase family. Type-1 seryl-tRNA synthetase subfamily. In terms of assembly, homodimer. The tRNA molecule binds across the dimer.

It is found in the cytoplasm. The enzyme catalyses tRNA(Ser) + L-serine + ATP = L-seryl-tRNA(Ser) + AMP + diphosphate + H(+). The catalysed reaction is tRNA(Sec) + L-serine + ATP = L-seryl-tRNA(Sec) + AMP + diphosphate + H(+). The protein operates within aminoacyl-tRNA biosynthesis; selenocysteinyl-tRNA(Sec) biosynthesis; L-seryl-tRNA(Sec) from L-serine and tRNA(Sec): step 1/1. In terms of biological role, catalyzes the attachment of serine to tRNA(Ser). Is also able to aminoacylate tRNA(Sec) with serine, to form the misacylated tRNA L-seryl-tRNA(Sec), which will be further converted into selenocysteinyl-tRNA(Sec). The chain is Serine--tRNA ligase from Bacillus cytotoxicus (strain DSM 22905 / CIP 110041 / 391-98 / NVH 391-98).